The following is a 263-amino-acid chain: 3-methyl-2-oxobutanoate hydroxymethyltransferase (263 aa).

Residues Asp45 and Asp84 each coordinate Mg(2+). Residues 45 to 46, Asp84, and Lys112 each bind 3-methyl-2-oxobutanoate; that span reads DS. A Mg(2+)-binding site is contributed by Glu114. Glu180 acts as the Proton acceptor in catalysis.

It belongs to the PanB family. Homodecamer; pentamer of dimers. Mg(2+) serves as cofactor.

Its subcellular location is the cytoplasm. The catalysed reaction is 3-methyl-2-oxobutanoate + (6R)-5,10-methylene-5,6,7,8-tetrahydrofolate + H2O = 2-dehydropantoate + (6S)-5,6,7,8-tetrahydrofolate. The protein operates within cofactor biosynthesis; (R)-pantothenate biosynthesis; (R)-pantoate from 3-methyl-2-oxobutanoate: step 1/2. In terms of biological role, catalyzes the reversible reaction in which hydroxymethyl group from 5,10-methylenetetrahydrofolate is transferred onto alpha-ketoisovalerate to form ketopantoate. The chain is 3-methyl-2-oxobutanoate hydroxymethyltransferase from Salmonella agona (strain SL483).